The sequence spans 417 residues: Glutamyl-tRNA reductase (417 aa).

Residues 49-52 (TCNR), Ser105, 110-112 (EPQ), and Gln116 each bind substrate. The active-site Nucleophile is Cys50. Residue 185–190 (GAGEMI) participates in NADP(+) binding.

Belongs to the glutamyl-tRNA reductase family. Homodimer.

The catalysed reaction is (S)-4-amino-5-oxopentanoate + tRNA(Glu) + NADP(+) = L-glutamyl-tRNA(Glu) + NADPH + H(+). Its pathway is porphyrin-containing compound metabolism; protoporphyrin-IX biosynthesis; 5-aminolevulinate from L-glutamyl-tRNA(Glu): step 1/2. In terms of biological role, catalyzes the NADPH-dependent reduction of glutamyl-tRNA(Glu) to glutamate 1-semialdehyde (GSA). The polypeptide is Glutamyl-tRNA reductase (Azoarcus sp. (strain BH72)).